Consider the following 358-residue polypeptide: Membrane-bound lytic murein transglycosylase C (358 aa).

Residues 1-16 form the signal peptide; the sequence is MKKILALLVIAPLLVS. C17 carries the N-palmitoyl cysteine lipid modification. C17 carries the S-diacylglycerol cysteine lipid modification.

Belongs to the transglycosylase Slt family.

It is found in the cell outer membrane. The catalysed reaction is Exolytic cleavage of the (1-&gt;4)-beta-glycosidic linkage between N-acetylmuramic acid (MurNAc) and N-acetylglucosamine (GlcNAc) residues in peptidoglycan, from either the reducing or the non-reducing ends of the peptidoglycan chains, with concomitant formation of a 1,6-anhydrobond in the MurNAc residue.. Functionally, murein-degrading enzyme. May play a role in recycling of muropeptides during cell elongation and/or cell division. This chain is Membrane-bound lytic murein transglycosylase C, found in Yersinia pseudotuberculosis serotype O:1b (strain IP 31758).